Reading from the N-terminus, the 210-residue chain is N-(5'-phosphoribosyl)anthranilate isomerase (210 aa).

The protein belongs to the TrpF family.

It carries out the reaction N-(5-phospho-beta-D-ribosyl)anthranilate = 1-(2-carboxyphenylamino)-1-deoxy-D-ribulose 5-phosphate. It participates in amino-acid biosynthesis; L-tryptophan biosynthesis; L-tryptophan from chorismate: step 3/5. The polypeptide is N-(5'-phosphoribosyl)anthranilate isomerase (Nostoc punctiforme (strain ATCC 29133 / PCC 73102)).